The chain runs to 343 residues: Anthranilate 1,2-dioxygenase electron transfer component (343 aa).

Residues 3–96 form the 2Fe-2S ferredoxin-type domain; that stretch reads HSVALNFADG…NAAFYFDHHS (94 aa). Residues cysteine 40, cysteine 45, cysteine 48, and cysteine 80 each contribute to the [2Fe-2S] cluster site. A ferredoxin-reductase region spans residues 98–338; that stretch reads ICNAGETLKI…HIYSEKFLQS (241 aa). The region spanning 103–206 is the FAD-binding FR-type domain; that stretch reads ETLKIATVVT…EAPLGSFYLR (104 aa).

The protein belongs to the bacterial ring-hydroxylating dioxygenase ferredoxin reductase family. As to quaternary structure, monomer. It is part of the anthranilate dioxygenase two component enzyme system. The other component is an oxygenase component consisting of 3 large (AntA) and 3 small (AntB) subunits. Requires FAD as cofactor. [2Fe-2S] cluster is required as a cofactor.

It carries out the reaction 2 reduced [2Fe-2S]-[ferredoxin] + NAD(+) + H(+) = 2 oxidized [2Fe-2S]-[ferredoxin] + NADH. It functions in the pathway aromatic compound metabolism; anthranilate degradation via hydroxylation; catechol from anthranilate: step 1/1. In terms of biological role, electron transfer component of anthranilate 1,2-dioxygenase system. In Acinetobacter baylyi (strain ATCC 33305 / BD413 / ADP1), this protein is Anthranilate 1,2-dioxygenase electron transfer component.